The following is a 289-amino-acid chain: tRNA U34 carboxymethyltransferase (289 aa).

Carboxy-S-adenosyl-L-methionine-binding positions include Lys-60, Trp-74, Lys-79, Gly-98, 120-122 (DPS), 147-148 (VE), Tyr-167, and Arg-282.

Belongs to the class I-like SAM-binding methyltransferase superfamily. CmoB family. Homotetramer.

The enzyme catalyses carboxy-S-adenosyl-L-methionine + 5-hydroxyuridine(34) in tRNA = 5-carboxymethoxyuridine(34) in tRNA + S-adenosyl-L-homocysteine + H(+). Its function is as follows. Catalyzes carboxymethyl transfer from carboxy-S-adenosyl-L-methionine (Cx-SAM) to 5-hydroxyuridine (ho5U) to form 5-carboxymethoxyuridine (cmo5U) at position 34 in tRNAs. The sequence is that of tRNA U34 carboxymethyltransferase from Campylobacter concisus (strain 13826).